A 337-amino-acid chain; its full sequence is Cytoskeleton protein RodZ (337 aa).

Residues 1–111 (MNTEATHDQN…LGKRRKKRDG (111 aa)) are Cytoplasmic-facing. An HTH cro/C1-type domain is found at 19–71 (LRNAREQLGLSQQAVAERLCLKVSTVRDIEEDKAPADLASTFLRGYIRSYARL). The segment at residues 30–49 (QQAVAERLCLKVSTVRDIEE) is a DNA-binding region (H-T-H motif). A helical; Signal-anchor for type II membrane protein transmembrane segment spans residues 112 to 132 (WLMTFTWLVLFVVIGLSGAWW). Over 133–337 (WQDHKAQQEE…TLNAEQSPAQ (205 aa)) the chain is Periplasmic. Residues 145–167 (TMADQSSAELSSNSEQGQSVPLN) are compositionally biased toward polar residues. The segment at 145 to 236 (TMADQSSAEL…TAATTPDGAA (92 aa)) is disordered. Residues 168–207 (TSTTTDPATTSTPPASVDTTATNTQTPVVTAPAPAVDPQQ) show a composition bias toward low complexity. Polar residues predominate over residues 208–218 (NAVVSPSQANV). Residues 219–236 (DTAATPAPTAATTPDGAA) are compositionally biased toward low complexity.

The protein belongs to the RodZ family.

Its subcellular location is the cell inner membrane. Functionally, cytoskeletal protein that is involved in cell-shape control through regulation of the length of the long axis. The sequence is that of Cytoskeleton protein RodZ from Escherichia coli O157:H7.